A 1134-amino-acid polypeptide reads, in one-letter code: MVWWGSSLLLPTLFLASHVGASVDLTLLANLRITDPQRFFLTCVSGEAGAGRSSDPPLLLEKDDRIVRTFPPGQPLYLARNGSHQVTLRGFSKPSDLVGVFSCVGGAGARRTRVLYVHNSPGAHLFPDKVTHTVNKGDTAVLSAHVHKEKQTDVIWKNNGSYFNTLDWQEADDGRFQLQLQNVQPPSSGIYSATYLEASPLGSAFFRLIVRGCGAGRWGPGCVKDCPGCLHGGVCHDHDGECVCPPGFTGTRCEQACREGRFGQSCQEQCPGTAGCRGLTFCLPDPYGCSCGSGWRGSQCQEACAPGHFGADCRLQCQCQNGGTCDRFSGCVCPSGWHGVHCEKSDRIPQILSMATEVEFNIGTMPRINCAAAGNPFPVRGSMKLRKPDGTMLLSTKVIVEPDRTTAEFEVPSLTLGDSGFWECRVSTSGGQDSRRFKVNVKVPPVPLTAPRLLAKQSRQLVVSPLVSFSGDGPISSVRLHYRPQDSTIAWSAIVVDPSENVTLMNLKPKTGYNVRVQLSRPGEGGEGGWGPSALMTTDCPEPLLQPWLESWHVEGPDRLRVSWSLPSVPLSGDGFLLRLWDGARGQERRENISFPQARTALLTGLTPGTHYQLDVRLYHCTLLGPASPPAHVHLPPSGPPAPRHLHAQALSDSEIQLMWQHPEAPSGPISKYIVEIQVAGGSGDPQWMDVDRPEETSIIVRGLNASTRYLFRVRASVQGLGDWSNTVEEATLGNGLQSEGPVRESRAAEEGLDQQLVLAVVGSVSATCLTILAALLALVCIRRSCLHRRRTFTYQSGSGEETILQFSSGTLTLTRRPKPQPEPLSYPVLEWEDITFEDLIGEGNFGQVIRAMIKKDGLKMNAAIKMLKEYASENDHRDFAGELEVLCKLGHHPNIINLLGACENRGYLYIAIEYAPYGNLLDFLRKSRVLETDPAFAREHGTASTLSSRQLLRFASDAANGMQYLSEKQFIHRDLAARNVLVGENLASKIADFGLSRGEEVYVKKTMGRLPVRWMAIESLNYSVYTTKSDVWSFGVLLWEIVSLGGTPYCGMTCAELYEKLPQGYRMEQPRNCDDEVYELMRQCWRDRPYERPPFAQIALQLGRMLEARKAYVNMSLFENFTYAGIDATAEEA.

The first 22 residues, 1–22, serve as a signal peptide directing secretion; that stretch reads MVWWGSSLLLPTLFLASHVGAS. The Extracellular segment spans residues 23 to 755; it reads VDLTLLANLR…SRAAEEGLDQ (733 aa). The region spanning 43–123 is the Ig-like C2-type 1 domain; that stretch reads CVSGEAGAGR…VLYVHNSPGA (81 aa). 2 N-linked (GlcNAc...) asparagine glycosylation sites follow: N81 and N159. EGF-like domains lie at 212–254, 256–301, and 303–343; these read GCGA…TRCE, ACRE…SQCQ, and ACAP…VHCE. Cystine bridges form between C226/C235, C229/C242, C244/C253, C266/C276, C270/C289, C291/C300, C313/C325, C319/C331, and C333/C342. Residues 349–440 enclose the Ig-like C2-type 2 domain; that stretch reads PQILSMATEV…GQDSRRFKVN (92 aa). Fibronectin type-III domains follow at residues 444-543, 546-638, and 642-736; these read PPVP…CPEP, QPWL…LPPS, and APRH…LGNG. 3 N-linked (GlcNAc...) asparagine glycosylation sites follow: N501, N592, and N705. The chain crosses the membrane as a helical span at residues 756 to 780; sequence QLVLAVVGSVSATCLTILAALLALV. Over 781-1134 the chain is Cytoplasmic; the sequence is CIRRSCLHRR…AGIDATAEEA (354 aa). Positions 835-1114 constitute a Protein kinase domain; it reads ITFEDLIGEG…RMLEARKAYV (280 aa). ATP is bound by residues 841 to 849 and K866; that span reads IGEGNFGQV. D975 (proton acceptor) is an active-site residue. At Y1003 the chain carries Phosphotyrosine; by autocatalysis.

The protein belongs to the protein kinase superfamily. Tyr protein kinase family. Tie subfamily. Heterodimer with TEK/TIE2. Interacts with SVEP1 (via C-terminus). In terms of processing, phosphorylated on tyrosine residues in response to ANGPT1, most likely by TEK/TIE2. Specifically expressed in developing vascular endothelial cells. Abundantly expressed in lung and heart, moderately in brain, liver and kidney, and weakly in thymus, spleen and testis.

The protein localises to the cell membrane. The catalysed reaction is L-tyrosyl-[protein] + ATP = O-phospho-L-tyrosyl-[protein] + ADP + H(+). Transmembrane tyrosine-protein kinase that may modulate TEK/TIE2 activity and contribute to the regulation of angiogenesis. In Mus musculus (Mouse), this protein is Tyrosine-protein kinase receptor Tie-1 (Tie1).